Consider the following 183-residue polypeptide: NAD(P)H-quinone oxidoreductase subunit I, chloroplastic (183 aa).

4Fe-4S ferredoxin-type domains lie at 55 to 84 (GRIH…VDWK) and 95 to 124 (KSYS…MTEE). Residues Cys-64, Cys-67, Cys-70, Cys-74, Cys-104, Cys-107, Cys-110, and Cys-114 each contribute to the [4Fe-4S] cluster site.

This sequence belongs to the complex I 23 kDa subunit family. As to quaternary structure, NDH is composed of at least 16 different subunits, 5 of which are encoded in the nucleus. Requires [4Fe-4S] cluster as cofactor.

The protein resides in the plastid. It localises to the chloroplast thylakoid membrane. The catalysed reaction is a plastoquinone + NADH + (n+1) H(+)(in) = a plastoquinol + NAD(+) + n H(+)(out). It catalyses the reaction a plastoquinone + NADPH + (n+1) H(+)(in) = a plastoquinol + NADP(+) + n H(+)(out). Functionally, NDH shuttles electrons from NAD(P)H:plastoquinone, via FMN and iron-sulfur (Fe-S) centers, to quinones in the photosynthetic chain and possibly in a chloroplast respiratory chain. The immediate electron acceptor for the enzyme in this species is believed to be plastoquinone. Couples the redox reaction to proton translocation, and thus conserves the redox energy in a proton gradient. This chain is NAD(P)H-quinone oxidoreductase subunit I, chloroplastic, found in Anthoceros angustus (Hornwort).